A 141-amino-acid chain; its full sequence is MRHGKAGRKLNRTASHRKAMFANMAASLIEHEQIVTTLPKAKEIRPIVEKLVTLGKRGDLHARRQAISQIRDVAVVSKLFDAIASRYATRNGGYLRIMKAGFRQGDNAPLAVIEFVDRDVDAKGSKDRARVSAEAEAAEAA.

This sequence belongs to the bacterial ribosomal protein bL17 family. Part of the 50S ribosomal subunit. Contacts protein L32.

This Rhizobium meliloti (strain 1021) (Ensifer meliloti) protein is Large ribosomal subunit protein bL17.